A 486-amino-acid polypeptide reads, in one-letter code: Small ribosomal subunit protein uS17B (486 aa).

The segment at 1–112 (MRDIGINGIK…IENKSNINFV (112 aa)) is 30S ribosomal protein S17. Residues 113–486 (DNLLNVDDKW…ELWTRKNYKS (374 aa)) are unknown.

Belongs to the universal ribosomal protein uS17 family. Part of the 30S ribosomal subunit.

Functionally, one of the primary rRNA binding proteins, it binds specifically to the 5'-end of 16S ribosomal RNA. The polypeptide is Small ribosomal subunit protein uS17B (Methanosarcina acetivorans (strain ATCC 35395 / DSM 2834 / JCM 12185 / C2A)).